The sequence spans 143 residues: Period circadian protein (143 aa).

The tract at residues 25–130 (NSKPVTAPTQ…GPSLAADNSI (106 aa)) is disordered. Composition is skewed to low complexity over residues 71–93 (SGNCTTNSNIRMSSFTNTSITGT) and 114–126 (GGAAADAGPSLAA).

As to quaternary structure, forms a heterodimer with timeless (TIM); the complex then translocates into the nucleus. Post-translationally, phosphorylated with a circadian rhythmicity, probably by the double-time protein (dbt). Phosphorylation could be implicated in the stability of per monomer and in the formation of heterodimer per-tim.

The protein localises to the nucleus. Its subcellular location is the cytoplasm. It is found in the perinuclear region. In terms of biological role, essential for biological clock functions. Determines the period length of circadian and ultradian rhythms; an increase in PER dosage leads to shortened circadian rhythms and a decrease leads to lengthened circadian rhythms. Essential for the circadian rhythmicity of locomotor activity, eclosion behavior, and for the rhythmic component of the male courtship song that originates in the thoracic nervous system. The biological cycle depends on the rhythmic formation and nuclear localization of the TIM-PER complex. Light induces the degradation of TIM, which promotes elimination of PER. Nuclear activity of the heterodimer coordinatively regulates PER and TIM transcription through a negative feedback loop. Behaves as a negative element in circadian transcriptional loop. Does not appear to bind DNA, suggesting indirect transcriptional inhibition. The chain is Period circadian protein (per) from Drosophila picticornis (Fruit fly).